Here is a 952-residue protein sequence, read N- to C-terminus: Protocadherin-20 (952 aa).

The N-terminal stretch at 1-60 (MRGRGNARSLLVQAVSLRPATWHPCLDMGHLHRPSSRTSHRNLPHVFLLFLFVGPFNCLA) is a signal peptide. The Extracellular portion of the chain corresponds to 61–891 (SYSRATELLY…VESMSCMPTL (831 aa)). 6 consecutive Cadherin domains span residues 64 to 210 (RATE…APQF), 211 to 321 (PISE…CPLF), 322 to 536 (IDSQ…APVF), 537 to 640 (LQPL…SPRF), 641 to 743 (INKD…PPLV), and 747 to 864 (QSNM…EPEI). An N-linked (GlcNAc...) asparagine glycan is attached at asparagine 135. 2 N-linked (GlcNAc...) asparagine glycosylation sites follow: asparagine 327 and asparagine 333. N-linked (GlcNAc...) asparagine glycans are attached at residues asparagine 681, asparagine 749, asparagine 804, asparagine 845, and asparagine 850. The chain crosses the membrane as a helical span at residues 892-912 (VALSVISLGSITLVTGMGIYI). The Cytoplasmic segment spans residues 913-952 (CLRKGKKHHREDDNLEVQIPLKGKIDLCMRERKPVDISNI).

The protein localises to the cell membrane. Its function is as follows. Potential calcium-dependent cell-adhesion protein. This Mus musculus (Mouse) protein is Protocadherin-20 (Pcdh20).